Here is a 247-residue protein sequence, read N- to C-terminus: Anionic trypsin (247 aa).

Positions 1–15 are cleaved as a signal peptide; that stretch reads MNPLLILAFLGAAVA. The propeptide at 16–23 is activation peptide; it reads TPTDDDDK. The Peptidase S1 domain occupies 24 to 244; the sequence is IVGGYTCEEN…FVDWIQSTIA (221 aa). 6 cysteine pairs are disulfide-bonded: Cys-30-Cys-160, Cys-48-Cys-64, Cys-132-Cys-233, Cys-139-Cys-206, Cys-171-Cys-185, and Cys-196-Cys-220. His-63 functions as the Charge relay system in the catalytic mechanism. The Ca(2+) site is built by Glu-75, Asn-77, Val-80, and Glu-85. The Charge relay system role is filled by Asp-107. The Charge relay system role is filled by Ser-200.

It belongs to the peptidase S1 family. Ca(2+) is required as a cofactor.

The protein localises to the secreted. The protein resides in the extracellular space. The catalysed reaction is Preferential cleavage: Arg-|-Xaa, Lys-|-Xaa.. The polypeptide is Anionic trypsin (Canis lupus familiaris (Dog)).